The sequence spans 455 residues: ATP-dependent protease ATPase subunit HslU (455 aa).

Residues isoleucine 19, glycine 61–glutamate 66, aspartate 268, glutamate 333, and arginine 405 each bind ATP.

It belongs to the ClpX chaperone family. HslU subfamily. In terms of assembly, a double ring-shaped homohexamer of HslV is capped on each side by a ring-shaped HslU homohexamer. The assembly of the HslU/HslV complex is dependent on binding of ATP.

It localises to the cytoplasm. Functionally, ATPase subunit of a proteasome-like degradation complex; this subunit has chaperone activity. The binding of ATP and its subsequent hydrolysis by HslU are essential for unfolding of protein substrates subsequently hydrolyzed by HslV. HslU recognizes the N-terminal part of its protein substrates and unfolds these before they are guided to HslV for hydrolysis. The chain is ATP-dependent protease ATPase subunit HslU from Francisella philomiragia subsp. philomiragia (strain ATCC 25017 / CCUG 19701 / FSC 153 / O#319-036).